The sequence spans 557 residues: Intraflagellar transport protein 56 (557 aa).

The segment at 1 to 30 (MLLSRMKPAVGGEASTSSNEKKRKNKSKKI) is disordered. Basic residues predominate over residues 21–30 (KKRKNKSKKI). TPR repeat units follow at residues 60-93 (EHADLWTGFCAFHVGDHKRAMEEYKALTLRPDCP), 95-128 (DVWVYLGCALFFLGLYKEAEEAALKGSKTQLQNR), 154-187 (TEDQLSLASIHYMRSHYQEAIDIYKRILLQNREF), and 471-504 (ANDCYKMGQFYYAAKAFDALERLDPNPEYWEGKR).

It belongs to the IFT56 family. Component of the IFT complex B.

Its subcellular location is the cell projection. The protein resides in the cilium. Its function is as follows. Component of the intraflagellar transport (IFT) complex B required for transport of proteins in the motile cilium. Required for transport of specific ciliary cargo proteins related to motility, while it is neither required for IFT complex B assembly or motion nor for cilium assembly. Plays a key role in maintaining the integrity of the IFT complex B and the proper ciliary localization of the IFT complex B components. Essential for maintaining proper microtubule organization within the ciliary axoneme. This is Intraflagellar transport protein 56 from Danio rerio (Zebrafish).